The chain runs to 425 residues: Gamma-glutamyl phosphate reductase (425 aa).

This sequence belongs to the gamma-glutamyl phosphate reductase family.

It localises to the cytoplasm. The catalysed reaction is L-glutamate 5-semialdehyde + phosphate + NADP(+) = L-glutamyl 5-phosphate + NADPH + H(+). Its pathway is amino-acid biosynthesis; L-proline biosynthesis; L-glutamate 5-semialdehyde from L-glutamate: step 2/2. Its function is as follows. Catalyzes the NADPH-dependent reduction of L-glutamate 5-phosphate into L-glutamate 5-semialdehyde and phosphate. The product spontaneously undergoes cyclization to form 1-pyrroline-5-carboxylate. The sequence is that of Gamma-glutamyl phosphate reductase from Novosphingobium aromaticivorans (strain ATCC 700278 / DSM 12444 / CCUG 56034 / CIP 105152 / NBRC 16084 / F199).